Reading from the N-terminus, the 443-residue chain is Xaa-Pro dipeptidase (443 aa).

Positions 246, 257, 339, 384, and 423 each coordinate Mn(2+).

Belongs to the peptidase M24B family. Bacterial-type prolidase subfamily. Mn(2+) serves as cofactor.

It carries out the reaction Xaa-L-Pro dipeptide + H2O = an L-alpha-amino acid + L-proline. Splits dipeptides with a prolyl residue in the C-terminal position. The protein is Xaa-Pro dipeptidase of Escherichia coli O7:K1 (strain IAI39 / ExPEC).